The following is a 323-amino-acid chain: rRNA 2'-O-methyltransferase fibrillarin (323 aa).

The tract at residues 1–78 (MRPGFSPRGG…GGGRGGFGGG (78 aa)) is disordered. 2 stretches are compositionally biased toward gly residues: residues 7–44 (PRGG…GGRG) and 63–78 (GRGG…FGGG). R8, R17, R23, and R29 each carry asymmetric dimethylarginine. Residues 174-175 (TT), 193-194 (EF), 218-219 (DA), and 238-241 (DVAQ) contribute to the S-adenosyl-L-methionine site. Residues 276-308 (APEAVFAAEVKKMQQENMKPQEQLTLEPYERDH) form a helical region.

The protein belongs to the methyltransferase superfamily. Fibrillarin family. As to quaternary structure, component of box C/D small nucleolar ribonucleoprotein (snoRNP) particles. Part of the small subunit (SSU) processome, composed of more than 70 proteins and the RNA chaperone small nucleolar RNA (snoRNA) U3. By homology to other fibrillarins, some or all of the N-terminal domain arginines are modified to asymmetric dimethylarginine (DMA).

It is found in the nucleus. It localises to the nucleolus. The protein localises to the nucleoplasm. The enzyme catalyses L-glutaminyl-[histone H2A] + S-adenosyl-L-methionine = N(5)-methyl-L-glutaminyl-[histone H2A] + S-adenosyl-L-homocysteine + H(+). It carries out the reaction a ribonucleotide in rRNA + S-adenosyl-L-methionine = a 2'-O-methylribonucleotide in rRNA + S-adenosyl-L-homocysteine + H(+). It catalyses the reaction a ribonucleotide in U6 snRNA + S-adenosyl-L-methionine = a 2'-O-methylribonucleotide in U6 snRNA + S-adenosyl-L-homocysteine + H(+). In terms of biological role, S-adenosyl-L-methionine-dependent methyltransferase that has the ability to methylate both RNAs and proteins. Involved in pre-rRNA processing by catalyzing the site-specific 2'-hydroxyl methylation of ribose moieties in pre-ribosomal RNA. Probably catalyzes 2'-O-methylation of U6 snRNAs in box C/D RNP complexes. U6 snRNA 2'-O-methylation is required for mRNA splicing fidelity. Also acts as a protein methyltransferase by mediating methylation of 'Gln-105' of histone H2A (H2AQ104me), a modification that impairs binding of the FACT complex and is specifically present at 35S ribosomal DNA locus. Part of the small subunit (SSU) processome, first precursor of the small eukaryotic ribosomal subunit. During the assembly of the SSU processome in the nucleolus, many ribosome biogenesis factors, an RNA chaperone and ribosomal proteins associate with the nascent pre-rRNA and work in concert to generate RNA folding, modifications, rearrangements and cleavage as well as targeted degradation of pre-ribosomal RNA by the RNA exosome. The polypeptide is rRNA 2'-O-methyltransferase fibrillarin (fbl) (Xenopus laevis (African clawed frog)).